The chain runs to 493 residues: Cysteine sulfinic acid decarboxylase (493 aa).

At K305 the chain carries N6-(pyridoxal phosphate)lysine.

Belongs to the group II decarboxylase family. As to quaternary structure, homodimer. Pyridoxal 5'-phosphate serves as cofactor. In terms of tissue distribution, expressed in liver and brain. Also expressed in both astrocytes and neurons, but lower levels are expressed in astrocytes.

It catalyses the reaction L-aspartate + H(+) = beta-alanine + CO2. It carries out the reaction 3-sulfino-L-alanine + H(+) = hypotaurine + CO2. The catalysed reaction is L-cysteate + H(+) = taurine + CO2. It functions in the pathway organosulfur biosynthesis; taurine biosynthesis; hypotaurine from L-cysteine: step 2/2. Functionally, catalyzes the decarboxylation of L-aspartate, 3-sulfino-L-alanine (cysteine sulfinic acid), and L-cysteate to beta-alanine, hypotaurine and taurine, respectively. The preferred substrate is 3-sulfino-L-alanine. Does not exhibit any decarboxylation activity toward glutamate. In Homo sapiens (Human), this protein is Cysteine sulfinic acid decarboxylase (CSAD).